The sequence spans 325 residues: Golgi to ER traffic protein 4 homolog A (325 aa).

Disordered regions lie at residues 1-22 (MAAAMAEQEGSKGSARNRGGVQ) and 306-325 (SGEDDDVEDGQEDSSPIELD). Positions 307–317 (GEDDDVEDGQE) are enriched in acidic residues.

The protein belongs to the GET4 family. Component of the bag6/bat3 complex.

Its subcellular location is the cytoplasm. The protein resides in the cytosol. As part of a cytosolic protein quality control complex, the bag6/bat3 complex, maintains misfolded and hydrophobic patches-containing proteins in a soluble state and participates in their proper delivery to the endoplasmic reticulum or alternatively can promote their sorting to the proteasome where they undergo degradation. The bag6/bat3 complex is involved in the post-translational delivery of tail-anchored/type II transmembrane proteins to the endoplasmic reticulum membrane. Similarly, the bag6/bat3 complex also functions as a sorting platform for proteins of the secretory pathway that are mislocalized to the cytosol either delivering them to the proteasome for degradation or to the endoplasmic reticulum. The bag6/bat3 complex also plays a role in the endoplasmic reticulum-associated degradation (ERAD), a quality control mechanism that eliminates unwanted proteins of the endoplasmic reticulum through their retrotranslocation to the cytosol and their targeting to the proteasome. It maintains these retrotranslocated proteins in an unfolded yet soluble state condition in the cytosol to ensure their proper delivery to the proteasome. The sequence is that of Golgi to ER traffic protein 4 homolog A (get4-a) from Xenopus laevis (African clawed frog).